Here is a 466-residue protein sequence, read N- to C-terminus: Asparagine--tRNA ligase (466 aa).

Belongs to the class-II aminoacyl-tRNA synthetase family. As to quaternary structure, homodimer.

The protein localises to the cytoplasm. The enzyme catalyses tRNA(Asn) + L-asparagine + ATP = L-asparaginyl-tRNA(Asn) + AMP + diphosphate + H(+). The polypeptide is Asparagine--tRNA ligase (Shewanella halifaxensis (strain HAW-EB4)).